Here is a 184-residue protein sequence, read N- to C-terminus: Elongation factor P (184 aa).

It belongs to the elongation factor P family.

It localises to the cytoplasm. It functions in the pathway protein biosynthesis; polypeptide chain elongation. Involved in peptide bond synthesis. Stimulates efficient translation and peptide-bond synthesis on native or reconstituted 70S ribosomes in vitro. Probably functions indirectly by altering the affinity of the ribosome for aminoacyl-tRNA, thus increasing their reactivity as acceptors for peptidyl transferase. This Albidiferax ferrireducens (strain ATCC BAA-621 / DSM 15236 / T118) (Rhodoferax ferrireducens) protein is Elongation factor P.